Reading from the N-terminus, the 366-residue chain is tRNA/tmRNA (uracil-C(5))-methyltransferase (366 aa).

Gln190, Tyr218, Asn223, Glu239, and Asp299 together coordinate S-adenosyl-L-methionine. The Nucleophile role is filled by Cys324. Residue Glu358 is the Proton acceptor of the active site.

Belongs to the class I-like SAM-binding methyltransferase superfamily. RNA M5U methyltransferase family. TrmA subfamily.

It carries out the reaction uridine(54) in tRNA + S-adenosyl-L-methionine = 5-methyluridine(54) in tRNA + S-adenosyl-L-homocysteine + H(+). The enzyme catalyses uridine(341) in tmRNA + S-adenosyl-L-methionine = 5-methyluridine(341) in tmRNA + S-adenosyl-L-homocysteine + H(+). Its function is as follows. Dual-specificity methyltransferase that catalyzes the formation of 5-methyluridine at position 54 (m5U54) in all tRNAs, and that of position 341 (m5U341) in tmRNA (transfer-mRNA). This chain is tRNA/tmRNA (uracil-C(5))-methyltransferase, found in Cellvibrio japonicus (strain Ueda107) (Pseudomonas fluorescens subsp. cellulosa).